Reading from the N-terminus, the 219-residue chain is Probable octanoyltransferase (219 aa).

In terms of domain architecture, BPL/LPL catalytic spans Gln43 to Lys219. Substrate contacts are provided by residues Arg83 to His90, Ala151 to Gly153, and Gly164 to Ala166. The Acyl-thioester intermediate role is filled by Cys182.

Belongs to the LipB family.

It catalyses the reaction octanoyl-[ACP] + L-lysyl-[protein] = N(6)-octanoyl-L-lysyl-[protein] + holo-[ACP] + H(+). The protein operates within protein modification; protein lipoylation via endogenous pathway; protein N(6)-(lipoyl)lysine from octanoyl-[acyl-carrier-protein]: step 1/2. Catalyzes the transfer of endogenously produced octanoic acid from octanoyl-acyl-carrier-protein onto the lipoyl domains of lipoate-dependent enzymes. Lipoyl-ACP can also act as a substrate although octanoyl-ACP is likely to be the physiological substrate. The chain is Probable octanoyltransferase from Schizosaccharomyces pombe (strain 972 / ATCC 24843) (Fission yeast).